We begin with the raw amino-acid sequence, 259 residues long: Putative hydro-lyase Rxyl_2409 (259 aa).

The segment at 1–24 (MGAPGAAEARERIRRGEHAGPTAG) is disordered. The span at 8–18 (EARERIRRGEH) shows a compositional bias: basic and acidic residues.

This sequence belongs to the D-glutamate cyclase family.

This chain is Putative hydro-lyase Rxyl_2409, found in Rubrobacter xylanophilus (strain DSM 9941 / JCM 11954 / NBRC 16129 / PRD-1).